Consider the following 61-residue polypeptide: DNA-directed RNA polymerase subunit Rpo6 (61 aa).

Belongs to the archaeal Rpo6/eukaryotic RPB6 RNA polymerase subunit family. As to quaternary structure, part of the RNA polymerase complex.

It is found in the cytoplasm. The catalysed reaction is RNA(n) + a ribonucleoside 5'-triphosphate = RNA(n+1) + diphosphate. Its function is as follows. DNA-dependent RNA polymerase (RNAP) catalyzes the transcription of DNA into RNA using the four ribonucleoside triphosphates as substrates. This is DNA-directed RNA polymerase subunit Rpo6 from Methanothermobacter thermautotrophicus (strain ATCC 29096 / DSM 1053 / JCM 10044 / NBRC 100330 / Delta H) (Methanobacterium thermoautotrophicum).